Consider the following 268-residue polypeptide: Phosphatidylglycerol--prolipoprotein diacylglyceryl transferase (268 aa).

Transmembrane regions (helical) follow at residues 14-34 (IIFS…LIGF), 60-80 (LLFN…VLFY), 95-115 (VWEG…AMLV), 124-144 (FWVV…MGRI), 176-196 (SQLY…NWFI), 203-223 (GSVA…VEFF), and 238-258 (ISMG…FIVL). Arg143 is an a 1,2-diacyl-sn-glycero-3-phospho-(1'-sn-glycerol) binding site.

This sequence belongs to the Lgt family.

The protein resides in the cell inner membrane. The catalysed reaction is L-cysteinyl-[prolipoprotein] + a 1,2-diacyl-sn-glycero-3-phospho-(1'-sn-glycerol) = an S-1,2-diacyl-sn-glyceryl-L-cysteinyl-[prolipoprotein] + sn-glycerol 1-phosphate + H(+). Its pathway is protein modification; lipoprotein biosynthesis (diacylglyceryl transfer). Its function is as follows. Catalyzes the transfer of the diacylglyceryl group from phosphatidylglycerol to the sulfhydryl group of the N-terminal cysteine of a prolipoprotein, the first step in the formation of mature lipoproteins. The chain is Phosphatidylglycerol--prolipoprotein diacylglyceryl transferase from Mannheimia succiniciproducens (strain KCTC 0769BP / MBEL55E).